Consider the following 491-residue polypeptide: Protein OrfX3 (491 aa).

The protein belongs to the TULIP P47 family. Heterodimer of OrfX1 and OrfX3; crystallizes as a dimer of heterodimers.

Expression of the ptox operon (ntnh-orfX1-orfX2-orfX3-pmp1) in B.thuringiensis kills Anopheles but not Aedes mosquito 3rd instar larvae. The ntnh-pmp1 construct is about half as toxic. The chain is Protein OrfX3 from Paraclostridium bifermentans (Clostridium bifermentans).